A 122-amino-acid polypeptide reads, in one-letter code: Large ribosomal subunit protein uL14 (122 aa).

Belongs to the universal ribosomal protein uL14 family. In terms of assembly, part of the 50S ribosomal subunit. Forms a cluster with proteins L3 and L19. In the 70S ribosome, L14 and L19 interact and together make contacts with the 16S rRNA in bridges B5 and B8.

Binds to 23S rRNA. Forms part of two intersubunit bridges in the 70S ribosome. The polypeptide is Large ribosomal subunit protein uL14 (Nocardia farcinica (strain IFM 10152)).